Reading from the N-terminus, the 215-residue chain is Protein C' (215 aa).

Disordered regions lie at residues 12–34 (MPSFLKKILKLRGRRQEEESRSR) and 51–71 (SEGTEAGSTTPSTLPKDQALP). Residues 15 to 22 (FLKKILKL) are involved in self-degradation and in host STAT1 degradation. A compositionally biased stretch (polar residues) spans 51-65 (SEGTEAGSTTPSTLP).

The protein belongs to the respirovirus protein C family. The different isoforms interact (via C-terminus) with unphosphorylated and phosphorylated human STAT1 (via N-terminus), favoring the formation of parallel STAT1 homodimers. The different isoforms do not interact with host STAT2. C protein interacts with L protein; this interaction has an inhibitory effect on viral transcription and replication. In terms of processing, Y1 and Y2 proteins are produced not only by alternative initiation, but also by proteolytic cleavage of C'. Only alternative initiation is detected in vitro, whereas in vivo cleavage seems to be predominant.

It is found in the host cytoplasm. The different products prevent the establishment of cellular antiviral state by blocking the interferon-alpha/beta (IFN-alpha/beta) and IFN-gamma signaling pathways. They inhibit IFN-alpha/beta induced tyrosine phosphorylation of STAT1 and STAT2. Blocking the IFN-alpha/beta pathway requires binding to STAT1 in the cytoplasm. They inhibit IFN-gamma induced serine phosphorylation of STAT1. Block the IFN-gamma pathway by binding to and stabilizing the parallel form of the STAT1 dimer, further inducing high-molecular-weight complex formation and inhibition of transcription by IFN-gamma. May also have a role in preventing the cell to enter apoptosis. Modulate regulation of viral transcription and replication. Overexpression inhibits the viral RNA polymerase. The absence of all C', C, Y1 and Y2 proteins leads to viral delayed growth. Plays an important role in virion particles release. Modulates virion shape. The polypeptide is Protein C' (P/V/C) (Sendai virus (strain Harris) (SeV)).